Here is a 132-residue protein sequence, read N- to C-terminus: Flagellar basal body rod protein FlgB (132 aa).

It belongs to the flagella basal body rod proteins family. The basal body constitutes a major portion of the flagellar organelle and consists of a number of rings mounted on a central rod. In Gram-negative bacteria, at least four rings, L, P, S and M are present, whereas Gram-positive bacteria lack the L and P rings. The rod consists of about 26 subunits of FlgG in the distal portion, and FlgB, FlgC and FlgF build up the proximal portion of the rod with about 6 subunits each. Rod assembly occurs by export via the flagellum-specific pathway of its constituent proteins and by their incorporation into the rod structure in the probable order of FlgB, FlgC, FlgF and FlgG. Another protein, FliE, also assembles onto the stable rod structure.

It is found in the bacterial flagellum basal body. In terms of biological role, structural component of flagellum, the bacterial motility apparatus. Part of the rod structure of flagellar basal body. This chain is Flagellar basal body rod protein FlgB, found in Aeromonas hydrophila.